We begin with the raw amino-acid sequence, 141 residues long: Sigma factor binding protein 2, chloroplastic (141 aa).

Residues 1 to 20 (MDQSSSTLLINQRKSSSSPT) show a composition bias toward polar residues. A disordered region spans residues 1 to 36 (MDQSSSTLLINQRKSSSSPTRIPPKQKRKSTTTHKP). Residues 1-38 (MDQSSSTLLINQRKSSSSPTRIPPKQKRKSTTTHKPIK) constitute a chloroplast transit peptide. The short motif at 13–29 (RKSSSSPTRIPPKQKRK) is the Bipartite nuclear localization signal element. The span at 24–36 (PKQKRKSTTTHKP) shows a compositional bias: basic residues. Positions 55–64 (FRELVQELTG) match the VQ motif.

As to quaternary structure, interacts with sigma factors in chloroplast. Interacts with WRKY33 in the nucleus.

It is found in the plastid. The protein resides in the chloroplast. It localises to the nucleus. In terms of biological role, functions as activator of WRKY33 in plant defense against necrotrophic pathogens by stimulating the DNA-binding activity of WRKY33. The protein is Sigma factor binding protein 2, chloroplastic (SIB2) of Arabidopsis thaliana (Mouse-ear cress).